The primary structure comprises 1334 residues: MSRSKESDELIFFVNGKKVIERNADPEVNLLFYLRKIIQLTGTKYGCGGGDCGACTVMISRYNPISKKISHFSAAACLVPICSLHGAAVTTVEGIGSTKTRIHPVQERIAKGHGTQCGFCTPGMVMSIYTLLRNHPEPSTEQIMETLGGNLCRCTGYRPIVESARSFSPNSACCPMNEKWKCCLDEGKNEPERKNSVCTKLYEKEEFQPLDPTQELIFPPELMRMAEDSPNTVLTFRGERTTWIAPGTLNDLLELKMEYPSAPLVIGNTCLGLDMKFKDVSYPIIISPARILELFVVTNTNEGLTLGAGLSLTQVKNILSDVVSRLPKERTQTYRALLKHLRTLAGQQIRNVASLGGHIISRLPTSDLNPIFGVGNCKLNVASTEGTQQIPLNDHFLAGVPEAILKPEQVLISVFVPLSRKWEFVSAFRQAPRQQNAFAIVNAGMRVAFKEDTNTITDLSILYGGIGATVVSAKSCQQLIGRCWDEEMLDDAGRMIREEVSLLTAAPGGMVEYRKTLAISFLFKFYLDVLKQLKRRNPHRCPDISQKLLQVLEDFPLTMPHGTQSFKDVDSQQPLQDQSGRPIMHQSGIKHATGEAVFCDDMSVLAGELFLAVVTSSKPHARIISLDASEALASPGVVDVITAQDVPGDNGREEESLYAQDEVICVGQIVCAVAADSYARAKQATKKVKIVYEDMEPMIVTVQDALQHESFIGPEKKLEQGNVQLAFQSADQILEGEVHLGGQEHFYMETQSVRVIPKGEDMEMDIYVSSQDAAFTQEMVARTLGIPKNRITCHVKRVGGGFGGKTSKPGLLASVAAVAAQKTGRPIRFILERGDDMLITGGRHPLLGKYRVGFMNNGKIKAADIQLYINGGCTPDDSELVIEYALLKLENAYKIPNLRVRGRVCKTNLPSNTAFRGFGFPQGAFVTGTWVSAVAAKCHLPPEKVRELNMYKTIDRTIHKQEFDPTNLIKCWETCMENSSYYSRKKAVDEFNQQSFWKKRGIAIIPMKFSVGFPKTFYHQAAALVQIYTDGSVLVAHGGVELGQGINTKMIQVASRELKIPMSYIHLDEMNTMTVPNTITTGGSTGADVNGRAVQNACQILMKRLEPIISQNPNGDWEEWINEAFIQSISLSATGYFRGYQADMDWEKGEGDIYPYFVFGAACSEVEIDCLTGAHKNIRTDIVMDGSFSINPAVDIGQIEGAFVQGLGLYTLEELKYSPEGVLYTRGPHQYKIASVSDIPEEFHVSLLTPTQNPKAIYSSKGLGEAGMFLGSSVFFAIAAAVAAARKERGLPLILAINSPATAEVIRMACEDQFTNLVPKTDSKCCKPWSIPVA.

Positions 8–95 (DELIFFVNGK…GAAVTTVEGI (88 aa)) constitute a 2Fe-2S ferredoxin-type domain. The [2Fe-2S] cluster site is built by Cys-47, Cys-52, Cys-55, and Cys-77. Gln-116 serves as a coordination point for Mo-molybdopterin. Cys-117, Cys-120, Cys-152, and Cys-154 together coordinate [2Fe-2S] cluster. The FAD-binding PCMH-type domain maps to 236 to 421 (FRGERTTWIA…ISVFVPLSRK (186 aa)). 264 to 271 (LVIGNTCL) is an FAD binding site. Phosphoserine is present on Ser-320. 4 residues coordinate FAD: Ser-354, His-358, Asp-367, and Leu-411. Positions 801, 1042, and 1198 each coordinate Mo-molybdopterin. Glu-1265 serves as the catalytic Proton acceptor; for azaheterocycle hydroxylase activity.

Belongs to the xanthine dehydrogenase family. In terms of assembly, homodimer. The cofactor is [2Fe-2S] cluster. FAD is required as a cofactor. Mo-molybdopterin serves as cofactor.

Its subcellular location is the cytoplasm. The catalysed reaction is an aldehyde + O2 + H2O = a carboxylate + H2O2 + H(+). In terms of biological role, oxidase with broad substrate specificity, oxidizing aromatic azaheterocycles, such as N1-methylnicotinamide and phthalazine, as well as aldehydes, such as benzaldehyde, retinal and pyridoxal. Plays a key role in the metabolism of xenobiotics and drugs containing aromatic azaheterocyclic substituents. Is probably involved in the regulation of reactive oxygen species homeostasis. Is a prominent source of superoxide generation via the one-electron reduction of molecular oxygen. Also catalyzes nitric oxide (NO) production; under anaerobic conditions, reduces nitrite to NO with NADH or aldehyde as electron donor, but under aerobic conditions, NADH is the preferred substrate. These reactions may be catalyzed by several isozymes. The sequence is that of Aldehyde oxidase 3 (Aox3) from Rattus norvegicus (Rat).